A 281-amino-acid chain; its full sequence is Ribosomal protein L11 methyltransferase (281 aa).

S-adenosyl-L-methionine-binding residues include Thr133, Gly154, Asp175, and Asn216.

It belongs to the methyltransferase superfamily. PrmA family.

It localises to the cytoplasm. It catalyses the reaction L-lysyl-[protein] + 3 S-adenosyl-L-methionine = N(6),N(6),N(6)-trimethyl-L-lysyl-[protein] + 3 S-adenosyl-L-homocysteine + 3 H(+). Methylates ribosomal protein L11. The protein is Ribosomal protein L11 methyltransferase of Campylobacter jejuni (strain RM1221).